The chain runs to 144 residues: Large ribosomal subunit protein uL11 (144 aa).

It belongs to the universal ribosomal protein uL11 family. As to quaternary structure, part of the ribosomal stalk of the 50S ribosomal subunit. Interacts with L10 and the large rRNA to form the base of the stalk. L10 forms an elongated spine to which L12 dimers bind in a sequential fashion forming a multimeric L10(L12)X complex. Contacts the CTC protein (RL25). One or more lysine residues are methylated.

In terms of biological role, forms part of the ribosomal stalk which helps the ribosome interact with GTP-bound translation factors. The sequence is that of Large ribosomal subunit protein uL11 from Deinococcus radiodurans (strain ATCC 13939 / DSM 20539 / JCM 16871 / CCUG 27074 / LMG 4051 / NBRC 15346 / NCIMB 9279 / VKM B-1422 / R1).